Here is a 518-residue protein sequence, read N- to C-terminus: Cytochrome P450 704C1 (518 aa).

2 consecutive transmembrane segments (helical) span residues 5-25 (ILTM…WIAS) and 299-319 (VILN…SWFI). Heme is bound at residue cysteine 461.

This sequence belongs to the cytochrome P450 family. Requires heme as cofactor.

The protein resides in the membrane. The sequence is that of Cytochrome P450 704C1 (CYP704C1) from Pinus taeda (Loblolly pine).